The following is a 103-amino-acid chain: uncharacterized protein (103 aa).

The helical transmembrane segment at 37–57 (FILLSSLLIGGLLITIACYHI) threads the bilayer.

Its subcellular location is the membrane. This is an uncharacterized protein from Saccharomyces cerevisiae (strain ATCC 204508 / S288c) (Baker's yeast).